The following is a 332-amino-acid chain: Abl interactor homolog (332 aa).

Positions 73 to 104 (HITSLLQLQTNEMEKLNIEIQTLTQRVRMIHD) form a coiled coil. Positions 152 to 332 (SDINQNGVPP…NDFPPPPPPM (181 aa)) are disordered. The segment covering 164 to 206 (NHSNSSANLTSSSGHLAASSTSNSSTPSYQSPSYSSQPTISSG) has biased composition (low complexity). Pro residues predominate over residues 221-247 (APPPPSLSVPAAPPPPVMNVPPPPPTS). Positions 248 to 257 (QRPSSVNNNA) are enriched in polar residues. Residues 277–314 (LPPPPSFGLPPPPTLGDDFPPPPPPPVGSYDFPPPPAR) show a composition bias toward pro residues.

This sequence belongs to the ABI family. In terms of assembly, part of a Scar/WAVE complex containing brk1, scrA, abiA, pirA and napA. Interacts with scrA.

Functionally, involved in regulation of actin and microtubule organization. Required for proper cytokinesis. This chain is Abl interactor homolog (abiA), found in Dictyostelium discoideum (Social amoeba).